Reading from the N-terminus, the 443-residue chain is MEFSTTLALFFTLSIFLVGAQAKVPVDDQFRVVNEGGYTDYSPIEYNPDVRGFVPFSDNFRLCFYNTTQNAYTLALRIGNRAQESTLRWVWEANRGSPVKENATLTFGEDGNLVLAEADGRVVWQTNTANKGVVGIKILENGNMVIYDSNGKFVWQSFDSPTDTLLVGQSLKLNGQNKLVSRLSPSVNANGPYSLVMEAKKLVLYYTTNKTPKPIGYYEYEFFTKIAQLQSMTFQAVEDADTTWGLHMEGVDSGSQFNVSTFLSRPKHNATLSFLRLESDGNIRVWSYSTLATSTAWDVTYTAFTNDNTDGNDECRIPEHCLGFGLCKKGQCNACPSDIGLLGWDETCKIPSLASCDPKTFHYFKIEGADSFMTKYNGGSTTTESACGDKCTRDCKCLGFFYNRKSSRCWLGYELKTLTKTGDTSLVAYVKAPNASKKSALAI.

The N-terminal stretch at 1-22 (MEFSTTLALFFTLSIFLVGAQA) is a signal peptide. In terms of domain architecture, Bulb-type lectin spans 29-159 (QFRVVNEGGY…NGKFVWQSFD (131 aa)). 4 N-linked (GlcNAc...) asparagine glycosylation sites follow: asparagine 66, asparagine 102, asparagine 258, and asparagine 269. Residues 254–296 (GSQFNVSTFLSRPKHNATLSFLRLESDGNIRVWSYSTLATSTA) form a WD repeat. The 78-residue stretch at 356–433 (CDPKTFHYFK…TSLVAYVKAP (78 aa)) folds into the PAN domain. Disulfide bonds link cysteine 387–cysteine 409 and cysteine 391–cysteine 397. Asparagine 434 carries an N-linked (GlcNAc...) asparagine glycan.

It is found in the secreted. It localises to the cell wall. In Arabidopsis thaliana (Mouse-ear cress), this protein is EP1-like glycoprotein 4.